A 451-amino-acid polypeptide reads, in one-letter code: Eukaryotic translation initiation factor 3 subunit E (451 aa).

A PCI domain is found at 256–425; that stretch reads TDLFFSPAYI…GTVIMNHPPQ (170 aa).

Belongs to the eIF-3 subunit E family. In terms of assembly, component of the eukaryotic translation initiation factor 3 (eIF-3) complex.

The protein localises to the cytoplasm. Its function is as follows. Component of the eukaryotic translation initiation factor 3 (eIF-3) complex, which is involved in protein synthesis of a specialized repertoire of mRNAs and, together with other initiation factors, stimulates binding of mRNA and methionyl-tRNAi to the 40S ribosome. The eIF-3 complex specifically targets and initiates translation of a subset of mRNAs involved in cell proliferation. The polypeptide is Eukaryotic translation initiation factor 3 subunit E (int6) (Aspergillus oryzae (strain ATCC 42149 / RIB 40) (Yellow koji mold)).